Reading from the N-terminus, the 233-residue chain is B-cell lymphoma/leukemia 10 (233 aa).

Met1 is subject to N-acetylmethionine. One can recognise a CARD domain in the interval Leu13 to Asp101. Glycyl lysine isopeptide (Lys-Gly) (interchain with G-Cter in ubiquitin) cross-links involve residues Lys17, Lys31, and Lys63. Ser138 carries the post-translational modification Phosphoserine. Residues Phe187–Gln233 form a disordered region. Pro residues predominate over residues Pro195 to Pro205.

In terms of assembly, homomultimer; homooligomerized following recruitment by CARD domain-containing proteins that form a nucleating helical template that recruits BCL10 via CARD-CARD interaction. Self-associates by CARD-CARD interaction and interacts with other CARD-proteins such as CARD9, CARD10, CARD11 and CARD14. Forms a complex with CARD14 and MALT1; resulting in the formation of a CBM (CARD14-BCL10-MALT1) complex. Forms a complex with CARD11 and MALT1; resulting in the formation of a CBM (CARD11-BCL10-MALT1) complex. Forms a complex with CARD9 and MALT1; resulting in the formation of a CBM (CARD9-BCL10-MALT1) complex. Found in a membrane raft complex, at least composed of BCL10, CARD11, DPP4 and IKBKB. Binds caspase-9 with its C-terminal domain. Interacts with TRAF2 and BIRC2/c-IAP2. Interacts with PELI2 and SOCS3; these interactions may be mutually exclusive. Post-translationally, phosphorylated. Phosphorylation results in dissociation from TRAF2 and binding to BIRC2/c-IAP2. Phosphorylated by IKBKB/IKKB. Ubiquitinated via both 'Lys-63'-linked and linear ('Met-1'-linked) polyubiquitin chains in response to T-cell receptor (TCR) activation. Ubiquitination is recognized by IKBKG/NEMO, the regulatory subunit of I-kappa-B kinase (IKK), and is required for TCR-induced NF-kappa-B activation. Linear ubiquitination at Lys-17, Lys-31 and Lys-63 is mediated by RNF31/HOIP; linear ubiquitination is recognized with much higher affinity than 'Lys-63'-linked ubiquitin by IKBKG/NEMO. CARD11 is required for linear ubiquitination by HOIP by promoting the targeting of BCL10 to RNF31/HOIP. In terms of processing, proteolytically cleaved by MALT1; required for T-cell activation. Ubiquitous.

Its subcellular location is the cytoplasm. It is found in the perinuclear region. The protein resides in the membrane raft. Its function is as follows. Plays a key role in both adaptive and innate immune signaling by bridging CARD domain-containing proteins to immune activation. Acts by channeling adaptive and innate immune signaling downstream of CARD domain-containing proteins CARD9, CARD11 and CARD14 to activate NF-kappa-B and MAP kinase p38 (MAPK11, MAPK12, MAPK13 and/or MAPK14) pathways which stimulate expression of genes encoding pro-inflammatory cytokines and chemokines. Recruited by activated CARD domain-containing proteins: homooligomerized CARD domain-containing proteins form a nucleating helical template that recruits BCL10 via CARD-CARD interaction, thereby promoting polymerization of BCL10, subsequent recruitment of MALT1 and formation of a CBM complex. This leads to activation of NF-kappa-B and MAP kinase p38 (MAPK11, MAPK12, MAPK13 and/or MAPK14) pathways which stimulate expression of genes encoding pro-inflammatory cytokines and chemokines. Activated by CARD9 downstream of C-type lectin receptors; CARD9-mediated signals are essential for antifungal immunity. Activated by CARD11 downstream of T-cell receptor (TCR) and B-cell receptor (BCR). Promotes apoptosis, pro-caspase-9 maturation and activation of NF-kappa-B via NIK and IKK. In Homo sapiens (Human), this protein is B-cell lymphoma/leukemia 10.